Consider the following 196-residue polypeptide: Peptidyl-tRNA hydrolase (196 aa).

Residue Y18 participates in tRNA binding. The active-site Proton acceptor is H23. 3 residues coordinate tRNA: F69, N71, and N117.

It belongs to the PTH family. Monomer.

The protein resides in the cytoplasm. The catalysed reaction is an N-acyl-L-alpha-aminoacyl-tRNA + H2O = an N-acyl-L-amino acid + a tRNA + H(+). Hydrolyzes ribosome-free peptidyl-tRNAs (with 1 or more amino acids incorporated), which drop off the ribosome during protein synthesis, or as a result of ribosome stalling. In terms of biological role, catalyzes the release of premature peptidyl moieties from peptidyl-tRNA molecules trapped in stalled 50S ribosomal subunits, and thus maintains levels of free tRNAs and 50S ribosomes. The chain is Peptidyl-tRNA hydrolase from Aliivibrio fischeri (strain MJ11) (Vibrio fischeri).